Here is a 140-residue protein sequence, read N- to C-terminus: Small ribosomal subunit protein uS19 (140 aa).

Belongs to the universal ribosomal protein uS19 family.

Its function is as follows. Protein S19 forms a complex with S13 that binds strongly to the 16S ribosomal RNA. The protein is Small ribosomal subunit protein uS19 of Sulfolobus acidocaldarius (strain ATCC 33909 / DSM 639 / JCM 8929 / NBRC 15157 / NCIMB 11770).